The chain runs to 289 residues: Putative transmembrane protein ORF111 (289 aa).

A run of 5 helical transmembrane segments spans residues 1–21 (MIGP…IFML), 112–132 (AIIT…VCIA), 151–171 (IGIT…FIVI), 189–209 (LNIS…TSIL), and 261–281 (YLLT…IGVG).

The protein localises to the host membrane. This is Putative transmembrane protein ORF111 from Ostreid herpesvirus 1 (isolate France) (OsHV-1).